We begin with the raw amino-acid sequence, 155 residues long: RNA pyrophosphohydrolase (155 aa).

A Nudix hydrolase domain is found at 6-148 (GYRANVAIVL…KQEVYRKALT (143 aa)). The short motif at 38–59 (GGVDTGETPLQAMYRELHEEIG) is the Nudix box element.

This sequence belongs to the Nudix hydrolase family. RppH subfamily. Requires a divalent metal cation as cofactor.

Its function is as follows. Accelerates the degradation of transcripts by removing pyrophosphate from the 5'-end of triphosphorylated RNA, leading to a more labile monophosphorylated state that can stimulate subsequent ribonuclease cleavage. In Francisella tularensis subsp. mediasiatica (strain FSC147), this protein is RNA pyrophosphohydrolase.